Consider the following 389-residue polypeptide: Curcumin synthase 1 (389 aa).

The active site involves Cys-164.

Belongs to the thiolase-like superfamily. Chalcone/stilbene synthases family. In terms of assembly, homodimer. Expressed in both the leaf and rhizome, with higher expression in the rhizome.

It carries out the reaction (E)-feruloylacetyl-CoA + (E)-feruloyl-CoA + H2O = curcumin + CO2 + 2 CoA. The protein operates within secondary metabolite biosynthesis; flavonoid biosynthesis. In terms of biological role, catalyzes the synthesis of curcumin by condensing feruloyl-CoA with a diketide-CoA in the curcuminoid biosynthesis. The sequence is that of Curcumin synthase 1 (CURS1) from Curcuma longa (Turmeric).